We begin with the raw amino-acid sequence, 1138 residues long: Tyrosine-protein kinase receptor Tie-1 (1138 aa).

An N-terminal signal peptide occupies residues 1–21; the sequence is MVWRVPPFLLPILFLASHVGA. The Extracellular portion of the chain corresponds to 22–759; that stretch reads AVDLTLLANL…SRAAEEGLDQ (738 aa). Residues 43–105 form the Ig-like C2-type 1 domain; the sequence is CVSGEAGAGR…PSDLVGVFSC (63 aa). N-linked (GlcNAc...) asparagine glycosylation is found at Asn83 and Asn161. EGF-like domains follow at residues 214 to 256, 258 to 303, and 305 to 345; these read GCGA…TRCE, ACRE…SQCQ, and ACAP…VHCE. Disulfide bonds link Cys228–Cys237, Cys231–Cys244, and Cys246–Cys255. Disulfide bonds link Cys315–Cys327, Cys321–Cys333, and Cys335–Cys344. In terms of domain architecture, Ig-like C2-type 2 spans 372–426; sequence CAAAGNPFPVRGSIELRKPDGTVLLSTKAIVEPEKTTAEFEVPRLVLADSGFWEC. 3 Fibronectin type-III domains span residues 446–545, 548–642, and 646–739; these read PPVP…CPEP, QPWL…LPPS, and APRH…TLGN. N-linked (GlcNAc...) asparagine glycosylation is found at Asn503, Asn596, and Asn709. The chain crosses the membrane as a helical span at residues 760–784; sequence QLILAVVGSVSATCLTILAALLTLV. Topologically, residues 785–1138 are cytoplasmic; the sequence is CIRRSCLHRR…AGIDATAEEA (354 aa). Residues 839–1118 form the Protein kinase domain; that stretch reads ITFEDLIGEG…RMLEARKAYV (280 aa). Residues 845 to 853 and Lys870 contribute to the ATP site; that span reads IGEGNFGQV. The active-site Proton acceptor is Asp979. Tyr1007 carries the phosphotyrosine; by autocatalysis modification.

This sequence belongs to the protein kinase superfamily. Tyr protein kinase family. Tie subfamily. Heterodimer with TEK/TIE2. Interacts with SVEP1 (via C-terminus). Post-translationally, phosphorylated on tyrosine residues in response to ANGPT1, most likely by TEK/TIE2. In terms of tissue distribution, specifically expressed in developing vascular endothelial cells.

It localises to the cell membrane. The catalysed reaction is L-tyrosyl-[protein] + ATP = O-phospho-L-tyrosyl-[protein] + ADP + H(+). Transmembrane tyrosine-protein kinase that may modulate TEK/TIE2 activity and contribute to the regulation of angiogenesis. This Homo sapiens (Human) protein is Tyrosine-protein kinase receptor Tie-1 (TIE1).